Consider the following 286-residue polypeptide: MGAAESEVETAAREVLAKVADILEPVGFQEEAELPAQILAEFVMDSRKKDKLLCSQLQVVDFLQNFLVQEGTAQDQNPLASEDTSRQKALEAKEQWKELKATYQEHVEVITNSLTEALPKVEEAQIKQAQLQEALKQLQAKKQMAMEKLRIAQKQWQLEQEKHLQNLAEASSEVRERQTGAQQELQRLYQELGTLKQQAGQEKDKLQRHQTFLQLLYTLQGKQLFNEAEAEIPQELDLPKDKLQQVTQPQEQNTQDTMGREADNPQPVGDAGLPWLPGRQQHKEES.

The stretch at 85 to 211 forms a coiled coil; the sequence is SRQKALEAKE…EKDKLQRHQT (127 aa). The disordered stretch occupies residues 230 to 286; it reads AEIPQELDLPKDKLQQVTQPQEQNTQDTMGREADNPQPVGDAGLPWLPGRQQHKEES. Over residues 244 to 255 the composition is skewed to low complexity; the sequence is QQVTQPQEQNTQ.

Component of the KNL1 complex composed of KNL1 and ZWINT. Part of the ten-subunit outer kinetochore KMN network that includes the KNL1, MIS12 and NDC80 complexes; a bioriented kinetochore contains approximately 150 copies of the network. Interacts with the MIS12 complex subunits MIS12 DSN1, and PMF1. Interacts with the NDC80 complex subunit NDC80 during mitosis. Interacts with ZW10. Interacts with CETN3.

It is found in the nucleus. The protein resides in the chromosome. It localises to the centromere. The protein localises to the kinetochore. Its function is as follows. Acts as a component of the outer kinetochore KNL1 complex that serves as a docking point for spindle assembly checkpoint components and mediates microtubule-kinetochore interactions. Kinetochores, consisting of a centromere-associated inner segment and a microtubule-contacting outer segment, play a crucial role in chromosome segregation by mediating the physical connection between centromeric DNA and spindle microtubules. The outer kinetochore is made up of the ten-subunit KMN network, comprising the MIS12, NDC80 and KNL1 complexes, and auxiliary microtubule-associated components; together they connect the outer kinetochore with the inner kinetochore, bind microtubules, and mediate interactions with mitotic checkpoint proteins that delay anaphase until chromosomes are bioriented on the spindle. Targets the RZZ complex to the kinetochore at prometaphase. Recruits MAD2L1 to the kinetochore, but is not required for BUB1B localization. In addition to orienting mitotic chromosomes, it is also essential for alignment of homologous chromosomes during meiotic metaphase I. In meiosis I, required to activate the spindle assembly checkpoint at unattached kinetochores to correct erroneous kinetochore-microtubule attachments. The protein is Outer kinetochore KNL1 complex subunit ZWINT (ZWINT) of Bos taurus (Bovine).